The chain runs to 108 residues: UPF0060 membrane protein Rsph17029_0436 (108 aa).

A run of 4 helical transmembrane segments spans residues 5–25 (LAAY…VWAW), 32–52 (ALWL…LALT), 62–82 (AVYG…VEGV), and 86–106 (RWDM…LWAP).

It belongs to the UPF0060 family.

The protein resides in the cell inner membrane. The chain is UPF0060 membrane protein Rsph17029_0436 from Cereibacter sphaeroides (strain ATCC 17029 / ATH 2.4.9) (Rhodobacter sphaeroides).